The following is a 553-amino-acid chain: MRSRSSTRIPVPLMLIIRIALTLSCIRLTSSLDGRPLAAAGIVVTGDKAVDIYTSSQTGSIIVKLLPNMPKDKEACAKAPLEAYNRTLTTLLTPLGDSIRRIQESVTTSGGRRQRRFIGAIIGSVALGVATPAQITAASALIQANQNAANILRLKESIAATNEAVHEVTDGLSQLAVAVGKMQQFVNDQFNNTAQQLDCIKITQQVGVELNLYLTELTTVFGPQITSPALTPLTIQALYNLAGGNMDYLLTKLGVGNNQLSSLIGSGLITGNPILYDSQTQILGIQITSPSVGNLNNMRATYLETLSVSTTKGFASALVPKVVTQVGSVIEELDTSYCMETDLDLYCTRIVTFPMSPGIYSCLSGNTSACMYSKTEGALTTPYMALKGSVIANCKMTTCRCADPPGIISQNYGEAVSLIDRHSCNVLSLDGITLRLSGEFDATYQKNISILDSQVIVTGNLDISTELGNVNNSISNALNKLEESNSKLDKLNVKLTSTSALITYIVLTVISLVFGVLSLVLACYLMYKQKAQQKTLLWLGNNTLDQMRATTKI.

A signal peptide spans methionine 1–serine 31. Topologically, residues leucine 32 to alanine 500 are extracellular. 5 disulfide bridges follow: cysteine 76-cysteine 199, cysteine 338-cysteine 347, cysteine 362-cysteine 370, cysteine 394-cysteine 399, and cysteine 401-cysteine 424. Asparagine 85 carries an N-linked (GlcNAc...) asparagine; by host glycan. The fusion peptide stretch occupies residues phenylalanine 117–leucine 141. Residues isoleucine 142–aspartate 170 adopt a coiled-coil conformation. The N-linked (GlcNAc...) asparagine; by host glycan is linked to asparagine 191. Asparagine 366 carries an N-linked (GlcNAc...) asparagine; by host glycan. Residues asparagine 447 and asparagine 471 are each glycosylated (N-linked (GlcNAc...) asparagine; by host). Positions glutamate 466–leucine 491 form a coiled coil. A helical transmembrane segment spans residues leucine 501–leucine 521. The Cytoplasmic segment spans residues alanine 522–isoleucine 553. A lipid anchor (S-palmitoyl cysteine; by host) is attached at cysteine 523.

This sequence belongs to the paramyxoviruses fusion glycoprotein family. As to quaternary structure, homotrimer of disulfide-linked F1-F2. In terms of processing, the inactive precursor F0 is glycosylated and proteolytically cleaved into F1 and F2 to be functionally active. The cleavage is mediated by cellular proteases during the transport and maturation of the polypeptide.

The protein localises to the virion membrane. It is found in the host cell membrane. Class I viral fusion protein. Under the current model, the protein has at least 3 conformational states: pre-fusion native state, pre-hairpin intermediate state, and post-fusion hairpin state. During viral and plasma cell membrane fusion, the heptad repeat (HR) regions assume a trimer-of-hairpins structure, positioning the fusion peptide in close proximity to the C-terminal region of the ectodomain. The formation of this structure appears to drive apposition and subsequent fusion of viral and plasma cell membranes. Directs fusion of viral and cellular membranes leading to delivery of the nucleocapsid into the cytoplasm. This fusion is pH independent and occurs directly at the outer cell membrane. The trimer of F1-F2 (F protein) probably interacts with HN at the virion surface. Upon HN binding to its cellular receptor, the hydrophobic fusion peptide is unmasked and interacts with the cellular membrane, inducing the fusion between cell and virion membranes. Later in infection, F proteins expressed at the plasma membrane of infected cells could mediate fusion with adjacent cells to form syncytia, a cytopathic effect that could lead to tissue necrosis. This Gallus gallus (Chicken) protein is Fusion glycoprotein F0 (F).